A 316-amino-acid chain; its full sequence is Transaldolase (316 aa).

Lysine 127 functions as the Schiff-base intermediate with substrate in the catalytic mechanism.

It belongs to the transaldolase family. Type 2 subfamily.

It is found in the cytoplasm. It carries out the reaction D-sedoheptulose 7-phosphate + D-glyceraldehyde 3-phosphate = D-erythrose 4-phosphate + beta-D-fructose 6-phosphate. It participates in carbohydrate degradation; pentose phosphate pathway; D-glyceraldehyde 3-phosphate and beta-D-fructose 6-phosphate from D-ribose 5-phosphate and D-xylulose 5-phosphate (non-oxidative stage): step 2/3. Its function is as follows. Transaldolase is important for the balance of metabolites in the pentose-phosphate pathway. The polypeptide is Transaldolase (Helicobacter pylori (strain P12)).